Consider the following 367-residue polypeptide: tRNA-specific 2-thiouridylase MnmA (367 aa).

ATP-binding positions include 10–17 and methionine 36; that span reads AMSGGVDS. Cysteine 106 acts as the Nucleophile in catalysis. Residues cysteine 106 and cysteine 204 are joined by a disulfide bond. Residue glycine 130 participates in ATP binding. Positions 154–156 are interaction with tRNA; sequence KDQ. The Cysteine persulfide intermediate role is filled by cysteine 204. The tract at residues 310–311 is interaction with tRNA; it reads RY.

The protein belongs to the MnmA/TRMU family.

Its subcellular location is the cytoplasm. The enzyme catalyses S-sulfanyl-L-cysteinyl-[protein] + uridine(34) in tRNA + AH2 + ATP = 2-thiouridine(34) in tRNA + L-cysteinyl-[protein] + A + AMP + diphosphate + H(+). Catalyzes the 2-thiolation of uridine at the wobble position (U34) of tRNA, leading to the formation of s(2)U34. The chain is tRNA-specific 2-thiouridylase MnmA from Desulforamulus reducens (strain ATCC BAA-1160 / DSM 100696 / MI-1) (Desulfotomaculum reducens).